We begin with the raw amino-acid sequence, 386 residues long: Succinyl-diaminopimelate desuccinylase (386 aa).

His77 is a binding site for Zn(2+). Residue Asp79 is part of the active site. Asp110 is a Zn(2+) binding site. The active-site Proton acceptor is Glu144. Zn(2+)-binding residues include Glu145, Glu173, and His359.

It belongs to the peptidase M20A family. DapE subfamily. Homodimer. It depends on Zn(2+) as a cofactor. The cofactor is Co(2+).

It carries out the reaction N-succinyl-(2S,6S)-2,6-diaminopimelate + H2O = (2S,6S)-2,6-diaminopimelate + succinate. It participates in amino-acid biosynthesis; L-lysine biosynthesis via DAP pathway; LL-2,6-diaminopimelate from (S)-tetrahydrodipicolinate (succinylase route): step 3/3. Its function is as follows. Catalyzes the hydrolysis of N-succinyl-L,L-diaminopimelic acid (SDAP), forming succinate and LL-2,6-diaminopimelate (DAP), an intermediate involved in the bacterial biosynthesis of lysine and meso-diaminopimelic acid, an essential component of bacterial cell walls. The chain is Succinyl-diaminopimelate desuccinylase from Ralstonia pickettii (strain 12J).